Consider the following 309-residue polypeptide: Homoserine kinase (309 aa).

91–101 contributes to the ATP binding site; that stretch reads PIGSGLGSSAC.

It belongs to the GHMP kinase family. Homoserine kinase subfamily.

It localises to the cytoplasm. It carries out the reaction L-homoserine + ATP = O-phospho-L-homoserine + ADP + H(+). The protein operates within amino-acid biosynthesis; L-threonine biosynthesis; L-threonine from L-aspartate: step 4/5. Its function is as follows. Catalyzes the ATP-dependent phosphorylation of L-homoserine to L-homoserine phosphate. This Klebsiella pneumoniae (strain 342) protein is Homoserine kinase.